A 503-amino-acid chain; its full sequence is Probable cytosol aminopeptidase (503 aa).

2 residues coordinate Mn(2+): Lys-270 and Asp-275. The active site involves Lys-282. The Mn(2+) site is built by Asp-293, Asp-352, and Glu-354. Residue Arg-356 is part of the active site.

The protein belongs to the peptidase M17 family. It depends on Mn(2+) as a cofactor.

It localises to the cytoplasm. The catalysed reaction is Release of an N-terminal amino acid, Xaa-|-Yaa-, in which Xaa is preferably Leu, but may be other amino acids including Pro although not Arg or Lys, and Yaa may be Pro. Amino acid amides and methyl esters are also readily hydrolyzed, but rates on arylamides are exceedingly low.. The enzyme catalyses Release of an N-terminal amino acid, preferentially leucine, but not glutamic or aspartic acids.. Functionally, presumably involved in the processing and regular turnover of intracellular proteins. Catalyzes the removal of unsubstituted N-terminal amino acids from various peptides. This is Probable cytosol aminopeptidase from Salmonella agona (strain SL483).